The following is an 810-amino-acid chain: RING finger protein unkempt homolog (810 aa).

The tract at residues 1 to 24 (MSKGPGPGGSAASSAPPAATAQVL) is disordered. Over residues 10–19 (SAASSAPPAA) the composition is skewed to low complexity. C3H1-type zinc fingers lie at residues 84–113 (YSPD…HRTT), 124–154 (YYKT…HGPH), 215–241 (NYKT…HNSK), 251–285 (KYRS…HTRT), and 293–321 (IYKS…HVEQ). Residues 239–265 (NSKDRRRSPRKHKYRSSPCPNVKHGDE) form a disordered region. Serine 240 is modified (phosphoserine). Residues 241–253 (KDRRRSPRKHKYR) show a composition bias toward basic residues. Residues 324 to 343 (LSDDLQPSSAVSSPTQPGPV) are disordered. Positions 328–338 (LQPSSAVSSPT) are enriched in polar residues. Phosphoserine occurs at positions 374, 378, 385, and 631. Positions 643-723 (GAAELARLRQ…QEELERLHAG (81 aa)) form a coiled coil. Residues 766–801 (SVKCLKCQEQKRAVLPCQHAALCELCAEGSECPICQ) form an RING-type; degenerate zinc finger.

Belongs to the unkempt family.

Its subcellular location is the cytoplasm. Functionally, sequence-specific RNA-binding protein which plays an important role in the establishment and maintenance of the early morphology of cortical neurons during embryonic development. Acts as a translation repressor and controls a translationally regulated cell morphology program to ensure proper structuring of the nervous system. Translational control depends on recognition of its binding element within target mRNAs which consists of a mandatory UAG trimer upstream of a U/A-rich motif. Associated with polysomes. This is RING finger protein unkempt homolog (UNK) from Homo sapiens (Human).